The primary structure comprises 217 residues: Probable transaldolase (217 aa).

Lys83 acts as the Schiff-base intermediate with substrate in catalysis.

The protein belongs to the transaldolase family. Type 3B subfamily.

The protein resides in the cytoplasm. The catalysed reaction is D-sedoheptulose 7-phosphate + D-glyceraldehyde 3-phosphate = D-erythrose 4-phosphate + beta-D-fructose 6-phosphate. It functions in the pathway carbohydrate degradation; pentose phosphate pathway; D-glyceraldehyde 3-phosphate and beta-D-fructose 6-phosphate from D-ribose 5-phosphate and D-xylulose 5-phosphate (non-oxidative stage): step 2/3. Its function is as follows. Transaldolase is important for the balance of metabolites in the pentose-phosphate pathway. The chain is Probable transaldolase from Bartonella bacilliformis (strain ATCC 35685 / KC583 / Herrer 020/F12,63).